A 366-amino-acid chain; its full sequence is Cytochrome c peroxidase, mitochondrial (366 aa).

The transit peptide at M1–Y46 directs the protein to the mitochondrion. Catalysis depends on H127, which acts as the Proton acceptor. H250 is a heme b binding site. The active-site Tryptophan radical intermediate is the W266.

This sequence belongs to the peroxidase family. Cytochrome c peroxidase subfamily. Forms a one-to-one complex with cytochrome c. The cofactor is heme b.

Its subcellular location is the mitochondrion matrix. The protein localises to the mitochondrion intermembrane space. The catalysed reaction is 2 Fe(II)-[cytochrome c] + H2O2 + 2 H(+) = 2 Fe(III)-[cytochrome c] + 2 H2O. Its function is as follows. Destroys radicals which are normally produced within the cells and which are toxic to biological systems. The chain is Cytochrome c peroxidase, mitochondrial (ccp1) from Aspergillus fumigatus (strain ATCC MYA-4609 / CBS 101355 / FGSC A1100 / Af293) (Neosartorya fumigata).